A 250-amino-acid chain; its full sequence is Ubiquinone/menaquinone biosynthesis C-methyltransferase UbiE (250 aa).

Residues Ser-73, Asp-94, and 122–123 (NA) each bind S-adenosyl-L-methionine.

The protein belongs to the class I-like SAM-binding methyltransferase superfamily. MenG/UbiE family.

It carries out the reaction a 2-demethylmenaquinol + S-adenosyl-L-methionine = a menaquinol + S-adenosyl-L-homocysteine + H(+). The enzyme catalyses a 2-methoxy-6-(all-trans-polyprenyl)benzene-1,4-diol + S-adenosyl-L-methionine = a 5-methoxy-2-methyl-3-(all-trans-polyprenyl)benzene-1,4-diol + S-adenosyl-L-homocysteine + H(+). It participates in quinol/quinone metabolism; menaquinone biosynthesis; menaquinol from 1,4-dihydroxy-2-naphthoate: step 2/2. It functions in the pathway cofactor biosynthesis; ubiquinone biosynthesis. In terms of biological role, methyltransferase required for the conversion of demethylmenaquinol (DMKH2) to menaquinol (MKH2) and the conversion of 2-polyprenyl-6-methoxy-1,4-benzoquinol (DDMQH2) to 2-polyprenyl-3-methyl-6-methoxy-1,4-benzoquinol (DMQH2). This is Ubiquinone/menaquinone biosynthesis C-methyltransferase UbiE from Legionella pneumophila (strain Paris).